Here is a 1331-residue protein sequence, read N- to C-terminus: Probable serine/threonine-protein kinase DDB_G0272254 (1331 aa).

Low complexity-rich tracts occupy residues 1–42, 96–116, and 153–175; these read METS…NSSS, NDNN…NNNN, and TQQT…STPS. Disordered regions lie at residues 1–43, 92–132, and 150–175; these read METS…SSSA, DKIC…QQIS, and ILNT…STPS. Transmembrane regions (helical) follow at residues 201–221 and 224–244; these read FGFS…IYIL and FVLK…FVIY. Over residues 259 to 287 the composition is skewed to low complexity; sequence SINDSDSSSNNNNNNNNTTTTNNDSASTK. Disordered stretches follow at residues 259–300, 320–419, 435–464, and 512–581; these read SIND…PETY, NLNN…LSKE, SVGK…SHNI, and AHSN…VVGN. Positions 288 to 299 are enriched in polar residues; that stretch reads GNNNNEISSPET. The segment covering 436-450 has biased composition (polar residues); the sequence is VGKTHNRSSSGSDSI. A compositionally biased stretch (low complexity) spans 514–531; sequence SNNNNNNNNSNTNNNNNN. A compositionally biased stretch (polar residues) spans 532-555; sequence QSVSAPVSQLATPVYQTPGTNSVV. Residues 557 to 577 are compositionally biased toward low complexity; sequence NLENDNENNNDSFSDINDNNS. 6 Kelch repeats span residues 665-710, 716-769, 770-816, 822-868, 909-959, and 962-1008; these read SLVL…NHDY, KFYL…RYGN, RFLL…GHTS, KLII…ELND, NIVM…LIKN, and KLFI…NNNN. Positions 834-860 are enriched in low complexity; it reads NNNNNNNNNNNNNNNNNNNNNNNNNNN. Residues 834–862 form a disordered region; the sequence is NNNNNNNNNNNNNNNNNNNNNNNNNNNKG. A disordered region spans residues 976–1042; that stretch reads NNNSSSGGNN…NNNNNNNNNN (67 aa). One can recognise a Protein kinase domain in the interval 1073-1331; sequence IKIDKEIGKG…EITNYLTKTF (259 aa). Residues 1079-1087 and lysine 1100 contribute to the ATP site; that span reads IGKGHFSKV. The active-site Proton acceptor is aspartate 1200.

The protein belongs to the protein kinase superfamily. TKL Ser/Thr protein kinase family.

Its subcellular location is the membrane. It carries out the reaction L-seryl-[protein] + ATP = O-phospho-L-seryl-[protein] + ADP + H(+). The enzyme catalyses L-threonyl-[protein] + ATP = O-phospho-L-threonyl-[protein] + ADP + H(+). This is Probable serine/threonine-protein kinase DDB_G0272254 from Dictyostelium discoideum (Social amoeba).